A 329-amino-acid chain; its full sequence is Porphobilinogen deaminase (329 aa).

Cysteine 250 bears the S-(dipyrrolylmethanemethyl)cysteine mark.

The protein belongs to the HMBS family. Monomer. Requires dipyrromethane as cofactor.

It catalyses the reaction 4 porphobilinogen + H2O = hydroxymethylbilane + 4 NH4(+). It functions in the pathway porphyrin-containing compound metabolism; protoporphyrin-IX biosynthesis; coproporphyrinogen-III from 5-aminolevulinate: step 2/4. Functionally, tetrapolymerization of the monopyrrole PBG into the hydroxymethylbilane pre-uroporphyrinogen in several discrete steps. The chain is Porphobilinogen deaminase from Burkholderia pseudomallei (strain 668).